The chain runs to 666 residues: tRNA 5-methylaminomethyl-2-thiouridine biosynthesis bifunctional protein MnmC (666 aa).

The segment at 1 to 245 (MKQYAIQPAN…KREMLCGVMA (245 aa)) is tRNA (mnm(5)s(2)U34)-methyltransferase. Residues 270–666 (IGGGIASALL…RKLLKGKAVK (397 aa)) are FAD-dependent cmnm(5)s(2)U34 oxidoreductase.

It in the N-terminal section; belongs to the methyltransferase superfamily. tRNA (mnm(5)s(2)U34)-methyltransferase family. This sequence in the C-terminal section; belongs to the DAO family. Requires FAD as cofactor.

The protein localises to the cytoplasm. It carries out the reaction 5-aminomethyl-2-thiouridine(34) in tRNA + S-adenosyl-L-methionine = 5-methylaminomethyl-2-thiouridine(34) in tRNA + S-adenosyl-L-homocysteine + H(+). Catalyzes the last two steps in the biosynthesis of 5-methylaminomethyl-2-thiouridine (mnm(5)s(2)U) at the wobble position (U34) in tRNA. Catalyzes the FAD-dependent demodification of cmnm(5)s(2)U34 to nm(5)s(2)U34, followed by the transfer of a methyl group from S-adenosyl-L-methionine to nm(5)s(2)U34, to form mnm(5)s(2)U34. The sequence is that of tRNA 5-methylaminomethyl-2-thiouridine biosynthesis bifunctional protein MnmC from Citrobacter koseri (strain ATCC BAA-895 / CDC 4225-83 / SGSC4696).